We begin with the raw amino-acid sequence, 377 residues long: Aquaporin-2 (377 aa).

Residues 1 to 14 lie on the Cytoplasmic side of the membrane; sequence MAANKGINGGIKNH. Residues 15–35 form a helical membrane-spanning segment; sequence FIAFLGEFVGTFLFLFFAYGG. At 36 to 56 the chain is on the extracellular side; it reads TQTANQTSQKNPSIVASPDIN. An N-linked (GlcNAc...) asparagine glycan is attached at asparagine 40. The chain crosses the membrane as a helical span at residues 57-77; that stretch reads QLLYIALIFGFSLTVNVWIFF. Residues 78–87 lie on the Cytoplasmic side of the membrane; sequence RVSGGLFNPA. The short motif at 85–87 is the NPA 1 element; that stretch reads NPA. The helical transmembrane segment at 88 to 108 threads the bilayer; it reads VTIALCLVGVVGPVRSIFIFI. At 109–144 the chain is on the extracellular side; sequence AQVVASIAAAAAVRGLLPGDTVLFSCALAPGTSIAQ. Residues 145-165 form a helical membrane-spanning segment; sequence GLFLEMFFTIELVFTILMLAA. Residues 166-171 are Cytoplasmic-facing; that stretch reads EKTKVT. Residues 172 to 192 form a helical membrane-spanning segment; sequence FVAPVGIGLSLFVAELMGVAW. Over 193-215 the chain is Extracellular; the sequence is TGGALNPARAFGAEVIGGFRGYH. The short motif at 198-200 is the NPA 2 element; that stretch reads NPA. A helical membrane pass occupies residues 216–236; the sequence is WIYWLGPLMGAVLAAGFYKVI. Topologically, residues 237–377 are cytoplasmic; sequence KFLNYEQVNG…ANAQNRAKTP (141 aa). 2 disordered regions span residues 278 to 332 and 358 to 377; these read LFQT…RENE and RLSGERYVQDANAQNRAKTP. Composition is skewed to polar residues over residues 315 to 328 and 368 to 377; these read PAQQQTWPHSASTI and ANAQNRAKTP.

It belongs to the MIP/aquaporin (TC 1.A.8) family.

The protein resides in the membrane. It catalyses the reaction H2O(in) = H2O(out). It carries out the reaction glycerol(in) = glycerol(out). Water channel required to facilitate the transport of water across membranes. Involved in conidiation. This chain is Aquaporin-2, found in Botryotinia fuckeliana (strain B05.10) (Noble rot fungus).